Here is a 743-residue protein sequence, read N- to C-terminus: Probable TonB-dependent siderophore receptor PiuA (743 aa).

Residues 1 to 28 form the signal peptide; sequence MSLIRTRKKIVSSAIASSLSMIATTAMA. The TBDR plug domain maps to 61 to 167; sequence PLLDTPKSVS…VGGSINMISK (107 aa). Positions 172–743 constitute a TBDR beta-barrel domain; the sequence is GDFLEGSVAA…SAVLAVNFKY (572 aa). Intrachain disulfides connect Cys-408–Cys-416 and Cys-627–Cys-632.

Belongs to the TonB-dependent receptor family.

The protein resides in the cell outer membrane. Functionally, probably involved in the initial step of iron uptake by binding iron chelating siderophores, thereby allowing extraction of iron from the environment. May bind the siderophore, ferric enterobactin, with micromolar affinity. The chain is Probable TonB-dependent siderophore receptor PiuA from Acinetobacter baumannii (strain ATCC 19606 / DSM 30007 / JCM 6841 / CCUG 19606 / CIP 70.34 / NBRC 109757 / NCIMB 12457 / NCTC 12156 / 81).